The chain runs to 480 residues: CASP8 and FADD-like apoptosis regulator (480 aa).

2 DED domains span residues M1–K73 and D92–K170. The interval M1 to K195 is interaction with CASP8. Residues M1–S227 are interaction with FADD. The interval M1 to Y305 is interaction with CASP8 propeptide. Positions M1 to R435 are not proteolytically processed and involved in apoptosis inhibition. Residues K192–R435 are interaction with CASP3. An interaction with TRAF1 and TRAF2 region spans residues K192–T480. The interval L217 to T480 is interaction with CASP8 subunits p18 and p10. The tract at residues E263–Q358 is caspase. An interaction with CASP8 region spans residues S370–T480.

The protein belongs to the peptidase C14A family. As to quaternary structure, TNFRSF6 stimulation triggers recruitment to the death-inducing signaling complex (DISC) formed by TNFRSF6, FADD and CASP8. A proteolytic fragment (p43) stays associated with the DISC. Also interacts with FADD, CASP8, CASP3, TRAF1, TRAF2 and Bcl-X(L) (in vitro). Interacts with RIPK1. (Microbial infection) Interacts with HBV protein X. Proteolytically processed by CASP8 generating subunit p43 and p12. As to expression, widely expressed. Higher expression in skeletal muscle, pancreas, heart, kidney, placenta, and peripheral blood leukocytes. Also detected in diverse cell lines. Isoform 8 is predominantly expressed in testis and skeletal muscle.

Its function is as follows. Apoptosis regulator protein which may function as a crucial link between cell survival and cell death pathways in mammalian cells. Acts as an inhibitor of TNFRSF6 mediated apoptosis. A proteolytic fragment (p43) is likely retained in the death-inducing signaling complex (DISC) thereby blocking further recruitment and processing of caspase-8 at the complex. Full length and shorter isoforms have been shown either to induce apoptosis or to reduce TNFRSF-triggered apoptosis. Lacks enzymatic (caspase) activity. This is CASP8 and FADD-like apoptosis regulator (CFLAR) from Homo sapiens (Human).